The sequence spans 192 residues: Thioredoxin-like 3-2, chloroplastic (192 aa).

The N-terminal 55 residues, 1–55 (MSEIVNLSSSLRSLNPKISPLVPPYRQTSSSFSRPRNFKYHSFTDKICLAAERIR), are a transit peptide targeting the chloroplast. A Thioredoxin domain is found at 66-191 (LQELDDSPVS…VREMIENDSI (126 aa)). Residues Cys-110 and Cys-113 each act as nucleophile in the active site. A disulfide bond links Cys-110 and Cys-113.

It belongs to the thioredoxin family.

It localises to the plastid. Its subcellular location is the chloroplast stroma. Its function is as follows. Probable thiol-disulfide oxidoreductase that may participate in various redox reactions. The chain is Thioredoxin-like 3-2, chloroplastic (WCRKC2) from Arabidopsis thaliana (Mouse-ear cress).